The following is a 320-amino-acid chain: Nuclease (320 aa).

His-155 acts as the Proton acceptor in catalysis. Asn-187 is a Mg(2+) binding site. Asn-204 carries N-linked (GlcNAc...) asparagine glycosylation. The cysteines at positions 312 and 317 are disulfide-linked.

This sequence belongs to the DNA/RNA non-specific endonuclease family. Homodimer; as a result of non-covalent interactions and not through the disulfide linkages between the two monomers. It depends on Mg(2+) as a cofactor. The cofactor is Mn(2+). Glycosylated.

It localises to the secreted. In terms of biological role, this enzyme has both RNase and DNase activity. The polypeptide is Nuclease (Syncephalastrum racemosum (Filamentous fungus)).